The following is a 469-amino-acid chain: Citrate synthase, mitochondrial (469 aa).

The N-terminal 31 residues, 1–31 (MTLLTASSRAAARLLGAKNSSCIIFAARHAS), are a transit peptide targeting the mitochondrion. Residues His-304 and His-350 contribute to the active site. Arg-359 serves as a coordination point for oxaloacetate. Asp-405 is an active-site residue. Residues Arg-431 and Arg-451 each contribute to the oxaloacetate site.

It belongs to the citrate synthase family. As to quaternary structure, homodimer.

Its subcellular location is the mitochondrion matrix. It catalyses the reaction oxaloacetate + acetyl-CoA + H2O = citrate + CoA + H(+). Its pathway is carbohydrate metabolism; tricarboxylic acid cycle; isocitrate from oxaloacetate: step 1/2. Functionally, key enzyme of the Krebs tricarboxylic acid cycle which catalyzes the synthesis of citrate from acetyl coenzyme A and oxaloacetate. This is Citrate synthase, mitochondrial (CS) from Amblyrhynchus cristatus (Galapagos marine iguana).